The sequence spans 152 residues: Xanthine-guanine phosphoribosyltransferase (152 aa).

5-phospho-alpha-D-ribose 1-diphosphate-binding positions include 37–38 (RG), Arg-69, and 88–96 (DDLVDTGGT). Arg-69 contacts GMP. Asp-89 lines the Mg(2+) pocket. Residues Asp-92 and Ile-135 each coordinate guanine. Residues Asp-92 and Ile-135 each coordinate xanthine. GMP is bound by residues 92–96 (DTGGT) and 134–135 (WI).

It belongs to the purine/pyrimidine phosphoribosyltransferase family. XGPT subfamily. As to quaternary structure, homotetramer. It depends on Mg(2+) as a cofactor.

Its subcellular location is the cell inner membrane. The enzyme catalyses GMP + diphosphate = guanine + 5-phospho-alpha-D-ribose 1-diphosphate. It catalyses the reaction XMP + diphosphate = xanthine + 5-phospho-alpha-D-ribose 1-diphosphate. It carries out the reaction IMP + diphosphate = hypoxanthine + 5-phospho-alpha-D-ribose 1-diphosphate. It participates in purine metabolism; GMP biosynthesis via salvage pathway; GMP from guanine: step 1/1. Its pathway is purine metabolism; XMP biosynthesis via salvage pathway; XMP from xanthine: step 1/1. Its function is as follows. Purine salvage pathway enzyme that catalyzes the transfer of the ribosyl-5-phosphate group from 5-phospho-alpha-D-ribose 1-diphosphate (PRPP) to the N9 position of the 6-oxopurines guanine and xanthine to form the corresponding ribonucleotides GMP (guanosine 5'-monophosphate) and XMP (xanthosine 5'-monophosphate), with the release of PPi. To a lesser extent, also acts on hypoxanthine. The protein is Xanthine-guanine phosphoribosyltransferase of Escherichia coli O7:K1 (strain IAI39 / ExPEC).